The sequence spans 825 residues: BEN domain-containing protein 3 (825 aa).

The span at Met-1–Glu-11 shows a compositional bias: acidic residues. Positions Met-1–Arg-35 are disordered. A Glycyl lysine isopeptide (Lys-Gly) (interchain with G-Cter in SUMO); alternate cross-link involves residue Lys-20. Residue Lys-20 forms a Glycyl lysine isopeptide (Lys-Gly) (interchain with G-Cter in SUMO1); alternate linkage. Lys-20 participates in a covalent cross-link: Glycyl lysine isopeptide (Lys-Gly) (interchain with G-Cter in SUMO2); alternate. Residues Lys-39, Lys-54, Lys-56, Lys-71, Lys-126, Lys-127, Lys-135, Lys-140, Lys-156, and Lys-174 each participate in a glycyl lysine isopeptide (Lys-Gly) (interchain with G-Cter in SUMO2) cross-link. The segment at Ser-52–Val-122 is disordered. Residues Lys-54–Lys-56 carry the Nuclear localization signal motif. Residues Pro-239–Arg-340 form the BEN 1 domain. Residue Ser-376 is modified to Phosphoserine. Positions Ala-384–Gly-484 constitute a BEN 2 domain. A Glycyl lysine isopeptide (Lys-Gly) (interchain with G-Cter in SUMO2) cross-link involves residue Lys-424. Ser-486 carries the post-translational modification Phosphoserine. Lys-509 is covalently cross-linked (Glycyl lysine isopeptide (Lys-Gly) (interchain with G-Cter in SUMO); alternate). Residue Lys-509 forms a Glycyl lysine isopeptide (Lys-Gly) (interchain with G-Cter in SUMO2); alternate linkage. Lys-525 participates in a covalent cross-link: Glycyl lysine isopeptide (Lys-Gly) (interchain with G-Cter in SUMO2). A BEN 3 domain is found at Gly-547–Gln-647. Residue Lys-697 forms a Glycyl lysine isopeptide (Lys-Gly) (interchain with G-Cter in SUMO2) linkage. One can recognise a BEN 4 domain in the interval Val-712–Lys-813.

Homooligomer, probably a homooctamer. Interacts with HDAC2 and HDAC3, but not HDAC1. Interacts with SALL4. Interacts with SMARCA5/SNF2H, BAZ2A/TIP5 and USP21. Interacts with the nucleosome remodeling and histone deacetylase (NuRD) repressor complex. Interacts (via BEN domains 1 and 3) with ERCC6L (via N-terminal TPR repeat); the interaction is direct. Sumoylated at Lys-20 by SUMO1 and at Lys-509 by SUMO1, SUMO2 and SUMO3. Sumoylation probably occurs sequentially, with that of Lys-20 preceding that of Lys-509. It does not alter association with heterochromatin, but is required for the repression of transcription.

It is found in the nucleus. The protein resides in the nucleolus. Transcriptional repressor which associates with the NoRC (nucleolar remodeling complex) complex and plays a key role in repressing rDNA transcription. The sumoylated form modulates the stability of the NoRC complex component BAZ2A/TIP5 by controlling its USP21-mediated deubiquitination. Binds to unmethylated major satellite DNA and is involved in the recruitment of the Polycomb repressive complex 2 (PRC2) to major satellites. Stimulates the ERCC6L translocase and ATPase activities. This Mus musculus (Mouse) protein is BEN domain-containing protein 3 (Bend3).